We begin with the raw amino-acid sequence, 359 residues long: Peptide chain release factor 1 (359 aa).

Glutamine 236 is subject to N5-methylglutamine.

It belongs to the prokaryotic/mitochondrial release factor family. Methylated by PrmC. Methylation increases the termination efficiency of RF1.

The protein resides in the cytoplasm. In terms of biological role, peptide chain release factor 1 directs the termination of translation in response to the peptide chain termination codons UAG and UAA. This is Peptide chain release factor 1 from Streptococcus thermophilus (strain ATCC BAA-250 / LMG 18311).